The primary structure comprises 320 residues: MPTQPVVRIGARGSKLSLTQSGIVQRRIAAALGVDPDNAAEVERVAPLIPITTTGDRVQDRRLLEIGGKGLFTKEIEEALMDGRIDCAVHSMKDMPAELPEGLCIAAIPEREDPRDAFISRGPERLEDLTEGAILGTASLRRQAQCLHRRPDLEAKLLRGNVETRLGKLEAGEYDAILLAYSGLRRLGLGHLPKSLIDPKEAPPAPGQGALAVETRAADRDLPWAQALRCRPTTLAVAAERGALIALEGSCRTPIGAHAWLEGGTCKLIVEALSPDGKLRFRHSGEAELSQMADPEASARDLGLSLGLAVKEEAGDAIVL.

Cysteine 251 carries the S-(dipyrrolylmethanemethyl)cysteine modification.

This sequence belongs to the HMBS family. As to quaternary structure, monomer. Dipyrromethane serves as cofactor.

It carries out the reaction 4 porphobilinogen + H2O = hydroxymethylbilane + 4 NH4(+). It participates in porphyrin-containing compound metabolism; protoporphyrin-IX biosynthesis; coproporphyrinogen-III from 5-aminolevulinate: step 2/4. Functionally, tetrapolymerization of the monopyrrole PBG into the hydroxymethylbilane pre-uroporphyrinogen in several discrete steps. The chain is Porphobilinogen deaminase from Phenylobacterium zucineum (strain HLK1).